The primary structure comprises 96 residues: Iron-sulfur cluster assembly protein CyaY (96 aa).

The protein belongs to the frataxin family.

Its function is as follows. Involved in iron-sulfur (Fe-S) cluster assembly. May act as a regulator of Fe-S biogenesis. This is Iron-sulfur cluster assembly protein CyaY from Rickettsia bellii (strain RML369-C).